Reading from the N-terminus, the 163-residue chain is Nucleotide-binding protein PC1_1036 (163 aa).

It belongs to the YajQ family.

Functionally, nucleotide-binding protein. This Pectobacterium carotovorum subsp. carotovorum (strain PC1) protein is Nucleotide-binding protein PC1_1036.